The primary structure comprises 500 residues: NAD(P)H-quinone oxidoreductase chain 4, chloroplastic (500 aa).

14 helical membrane passes run 4–24 (FPWL…IFVF), 35–55 (YTIF…SYYF), 84–104 (GLSL…TLAA), 113–133 (LFHF…SSQN), 134–154 (LLLF…LLAM), 167–187 (FILY…GIAF), 211–231 (ILFY…IPLH), 242–262 (HYST…YGLV), 272–292 (AHSI…IYAA), 305–325 (IAYS…SISD), 330–350 (GAIL…FLSG), 386–406 (LALP…GIIT), 416–436 (ILIT…LLSM), and 463–483 (FVSI…DFVF).

Belongs to the complex I subunit 4 family.

Its subcellular location is the plastid. The protein localises to the chloroplast thylakoid membrane. It catalyses the reaction a plastoquinone + NADH + (n+1) H(+)(in) = a plastoquinol + NAD(+) + n H(+)(out). The catalysed reaction is a plastoquinone + NADPH + (n+1) H(+)(in) = a plastoquinol + NADP(+) + n H(+)(out). This is NAD(P)H-quinone oxidoreductase chain 4, chloroplastic from Populus trichocarpa (Western balsam poplar).